The primary structure comprises 457 residues: Argininosuccinate lyase (457 aa).

This sequence belongs to the lyase 1 family. Argininosuccinate lyase subfamily.

The protein localises to the cytoplasm. The catalysed reaction is 2-(N(omega)-L-arginino)succinate = fumarate + L-arginine. It functions in the pathway amino-acid biosynthesis; L-arginine biosynthesis; L-arginine from L-ornithine and carbamoyl phosphate: step 3/3. In Escherichia coli O157:H7, this protein is Argininosuccinate lyase.